The primary structure comprises 173 residues: Large ribosomal subunit protein uL10 (173 aa).

This sequence belongs to the universal ribosomal protein uL10 family. As to quaternary structure, part of the ribosomal stalk of the 50S ribosomal subunit. The N-terminus interacts with L11 and the large rRNA to form the base of the stalk. The C-terminus forms an elongated spine to which L12 dimers bind in a sequential fashion forming a multimeric L10(L12)X complex.

Functionally, forms part of the ribosomal stalk, playing a central role in the interaction of the ribosome with GTP-bound translation factors. This Myxococcus xanthus (strain DK1622) protein is Large ribosomal subunit protein uL10.